The chain runs to 1083 residues: UPF0182 protein BAD_0641 (1083 aa).

The interval 1 to 72 (MSFFDMFGPM…TSKPNRPRKP (72 aa)) is disordered. The next 7 helical transmembrane spans lie at 78 to 98 (IFIGVVLALAIVIGLFFALAQ), 125 to 145 (LWLAYAVLIAAVGFISATLAI), 178 to 198 (IAVVISLIVGLVFGSQFNANW), 239 to 259 (SLLLLAGIIFSIVTHVLMGGI), 281 to 301 (IGIWLMLNMFAWAANQVLGVF), 325 to 345 (VTFIMAAITAILGVILGLWIM), and 372 to 392 (VAIASAIVVSLVLTVAWPVLL). Positions 976-1061 (DSGASAGDAE…SDAAMKKGDW (86 aa)) are disordered. 2 stretches are compositionally biased toward basic and acidic residues: residues 991–1013 (TDDKQDAKNDDSADGKTNTDGKQ) and 1050–1060 (KDSDAAMKKGD).

The protein belongs to the UPF0182 family.

The protein resides in the cell membrane. The polypeptide is UPF0182 protein BAD_0641 (Bifidobacterium adolescentis (strain ATCC 15703 / DSM 20083 / NCTC 11814 / E194a)).